A 79-amino-acid polypeptide reads, in one-letter code: DNA gyrase inhibitor YacG (79 aa).

Zn(2+)-binding residues include cysteine 7, cysteine 10, cysteine 26, and cysteine 30.

Belongs to the DNA gyrase inhibitor YacG family. As to quaternary structure, interacts with GyrB. Zn(2+) serves as cofactor.

In terms of biological role, inhibits all the catalytic activities of DNA gyrase by preventing its interaction with DNA. Acts by binding directly to the C-terminal domain of GyrB, which probably disrupts DNA binding by the gyrase. The chain is DNA gyrase inhibitor YacG from Shewanella pealeana (strain ATCC 700345 / ANG-SQ1).